Here is a 205-residue protein sequence, read N- to C-terminus: MKAGIDEAGKGCVIGPLVVAGVACSDEDRLRKLGVKDSKKLSQGRREELAEEIRKICRTEVLKVSPENLDERMAAKTINEILKECYAEIILRLKPEIAYVDSPDVIPERLSRELEEITGLRVVAEHKADEKYPLVAAASIIAKVEREREIERLKEKFGDFGSGYASDPRTREVLKEWIASGRIPSCVRMRWKTVSNLRQKTLDDF.

Residues 1 to 203 (MKAGIDEAGK…VSNLRQKTLD (203 aa)) form the RNase H type-2 domain. 2 residues coordinate a divalent metal cation: Asp6 and Glu7. Substrate is bound at residue Arg46. Asp101 is an a divalent metal cation binding site. Positions 143, 146, and 164 each coordinate substrate.

It belongs to the RNase HII family. Mn(2+) serves as cofactor. It depends on Mg(2+) as a cofactor.

Its subcellular location is the cytoplasm. The catalysed reaction is Endonucleolytic cleavage to 5'-phosphomonoester.. Functionally, endonuclease that specifically degrades the RNA of RNA-DNA hybrids. The sequence is that of Ribonuclease HII (rnhB) from Archaeoglobus fulgidus (strain ATCC 49558 / DSM 4304 / JCM 9628 / NBRC 100126 / VC-16).